The following is a 172-amino-acid chain: Large ribosomal subunit protein uL10 (172 aa).

It belongs to the universal ribosomal protein uL10 family. As to quaternary structure, part of the ribosomal stalk of the 50S ribosomal subunit. The N-terminus interacts with L11 and the large rRNA to form the base of the stalk. The C-terminus forms an elongated spine to which L12 dimers bind in a sequential fashion forming a multimeric L10(L12)X complex.

Its function is as follows. Forms part of the ribosomal stalk, playing a central role in the interaction of the ribosome with GTP-bound translation factors. This is Large ribosomal subunit protein uL10 from Bradyrhizobium sp. (strain ORS 278).